We begin with the raw amino-acid sequence, 343 residues long: Methylthioribose-1-phosphate isomerase (343 aa).

Substrate contacts are provided by residues 48–50, arginine 88, and glutamine 193; that span reads RGA. Aspartate 234 serves as the catalytic Proton donor. 244–245 provides a ligand contact to substrate; that stretch reads NK.

It belongs to the eIF-2B alpha/beta/delta subunits family. MtnA subfamily.

The enzyme catalyses 5-(methylsulfanyl)-alpha-D-ribose 1-phosphate = 5-(methylsulfanyl)-D-ribulose 1-phosphate. Its pathway is amino-acid biosynthesis; L-methionine biosynthesis via salvage pathway; L-methionine from S-methyl-5-thio-alpha-D-ribose 1-phosphate: step 1/6. Functionally, catalyzes the interconversion of methylthioribose-1-phosphate (MTR-1-P) into methylthioribulose-1-phosphate (MTRu-1-P). This is Methylthioribose-1-phosphate isomerase from Thermotoga neapolitana (strain ATCC 49049 / DSM 4359 / NBRC 107923 / NS-E).